Here is a 231-residue protein sequence, read N- to C-terminus: MNADDQKKAAAVRALEFVKPGMKLGMGTGSTAEHFVRALGEKVKAGLDIVGVPTSERTAKLAASLGIPLTNLDDTPHLDITVDGADELDGKLRLIKGGGGALLREKIVATASDRMIVIADASKLVKTLGSFPLPVEVIPFGSAVTARKIAEVASAHGCTGKMSRRADEYGEPFFTDSENFIYDCAFGSIPDPDGLSAALNRIPGVVDNGLFIGIAAMAIVGTDKGTDIIEA.

Residues 28–31 (TGST), 83–86 (DGAD), and 96–99 (KGGG) contribute to the substrate site. Glu105 acts as the Proton acceptor in catalysis. Lys123 serves as a coordination point for substrate.

The protein belongs to the ribose 5-phosphate isomerase family. In terms of assembly, homodimer.

The catalysed reaction is aldehydo-D-ribose 5-phosphate = D-ribulose 5-phosphate. The protein operates within carbohydrate degradation; pentose phosphate pathway; D-ribose 5-phosphate from D-ribulose 5-phosphate (non-oxidative stage): step 1/1. In terms of biological role, catalyzes the reversible conversion of ribose-5-phosphate to ribulose 5-phosphate. The polypeptide is Ribose-5-phosphate isomerase A (Parvibaculum lavamentivorans (strain DS-1 / DSM 13023 / NCIMB 13966)).